A 65-amino-acid chain; its full sequence is Neurotoxin BmK-M3 (65 aa).

Residues 2 to 64 (RDAYIAKPEN…VPIRVWGKCH (63 aa)) form the LCN-type CS-alpha/beta domain. 4 cysteine pairs are disulfide-bonded: cysteine 12/cysteine 63, cysteine 16/cysteine 36, cysteine 22/cysteine 46, and cysteine 26/cysteine 48.

It belongs to the long (4 C-C) scorpion toxin superfamily. Sodium channel inhibitor family. Alpha subfamily. In terms of tissue distribution, expressed by the venom gland.

It is found in the secreted. Its function is as follows. Binds to sodium channels (Nav) and inhibits the inactivation of the activated channels, thereby blocking neuronal transmission. This Olivierus martensii (Manchurian scorpion) protein is Neurotoxin BmK-M3.